Here is a 93-residue protein sequence, read N- to C-terminus: Corticostatin 1 (93 aa).

The N-terminal stretch at methionine 1–alanine 19 is a signal peptide. The propeptide occupies glutamate 20 to lysine 59. 3 disulfides stabilise this stretch: cysteine 62–cysteine 90, cysteine 64–cysteine 79, and cysteine 69–cysteine 89.

This sequence belongs to the alpha-defensin family.

It is found in the secreted. Functionally, microbicidal activity and inhibits corticotropin (ACTH) stimulated corticosterone production. The sequence is that of Corticostatin 1 from Oryctolagus cuniculus (Rabbit).